The chain runs to 181 residues: Acireductone dioxygenase (181 aa).

The Fe(2+) site is built by His97, His99, Glu103, and His141. Ni(2+) contacts are provided by His97, His99, Glu103, and His141.

It belongs to the acireductone dioxygenase (ARD) family. Monomer. It depends on Fe(2+) as a cofactor. Requires Ni(2+) as cofactor.

The enzyme catalyses 1,2-dihydroxy-5-(methylsulfanyl)pent-1-en-3-one + O2 = 3-(methylsulfanyl)propanoate + CO + formate + 2 H(+). It carries out the reaction 1,2-dihydroxy-5-(methylsulfanyl)pent-1-en-3-one + O2 = 4-methylsulfanyl-2-oxobutanoate + formate + 2 H(+). Its pathway is amino-acid biosynthesis; L-methionine biosynthesis via salvage pathway; L-methionine from S-methyl-5-thio-alpha-D-ribose 1-phosphate: step 5/6. In terms of biological role, catalyzes 2 different reactions between oxygen and the acireductone 1,2-dihydroxy-3-keto-5-methylthiopentene (DHK-MTPene) depending upon the metal bound in the active site. Fe-containing acireductone dioxygenase (Fe-ARD) produces formate and 2-keto-4-methylthiobutyrate (KMTB), the alpha-ketoacid precursor of methionine in the methionine recycle pathway. Ni-containing acireductone dioxygenase (Ni-ARD) produces methylthiopropionate, carbon monoxide and formate, and does not lie on the methionine recycle pathway. The chain is Acireductone dioxygenase from Pseudomonas paraeruginosa (strain DSM 24068 / PA7) (Pseudomonas aeruginosa (strain PA7)).